Here is a 112-residue protein sequence, read N- to C-terminus: Small ribosomal subunit protein uS11c (112 aa).

Belongs to the universal ribosomal protein uS11 family. As to quaternary structure, part of the 30S ribosomal subunit.

It is found in the plastid. The chain is Small ribosomal subunit protein uS11c from Euglena longa (Euglenophycean alga).